Consider the following 470-residue polypeptide: Methylenetetrahydrofolate--tRNA-(uracil-5-)-methyltransferase TrmFO (470 aa).

An FAD-binding site is contributed by 10 to 15 (GAGLAG).

It belongs to the MnmG family. TrmFO subfamily. FAD is required as a cofactor.

Its subcellular location is the cytoplasm. It catalyses the reaction uridine(54) in tRNA + (6R)-5,10-methylene-5,6,7,8-tetrahydrofolate + NADH + H(+) = 5-methyluridine(54) in tRNA + (6S)-5,6,7,8-tetrahydrofolate + NAD(+). The enzyme catalyses uridine(54) in tRNA + (6R)-5,10-methylene-5,6,7,8-tetrahydrofolate + NADPH + H(+) = 5-methyluridine(54) in tRNA + (6S)-5,6,7,8-tetrahydrofolate + NADP(+). Its function is as follows. Catalyzes the folate-dependent formation of 5-methyl-uridine at position 54 (M-5-U54) in all tRNAs. The chain is Methylenetetrahydrofolate--tRNA-(uracil-5-)-methyltransferase TrmFO from Prochlorococcus marinus (strain MIT 9301).